The chain runs to 203 residues: Outer-membrane lipoprotein LolB (203 aa).

The signal sequence occupies residues 1–18 (MTLRSFLIFFLSSLILAG). Cys-19 carries N-palmitoyl cysteine lipidation. Cys-19 carries S-diacylglycerol cysteine lipidation.

It belongs to the LolB family. Monomer.

The protein localises to the cell outer membrane. Functionally, plays a critical role in the incorporation of lipoproteins in the outer membrane after they are released by the LolA protein. The chain is Outer-membrane lipoprotein LolB from Vibrio parahaemolyticus serotype O3:K6 (strain RIMD 2210633).